The primary structure comprises 382 residues: Dihydroflavonol 4-reductase (382 aa).

Positions 44 and 163 each coordinate NADP(+).

Belongs to the NAD(P)-dependent epimerase/dehydratase family. Dihydroflavonol-4-reductase subfamily.

It carries out the reaction a (2R,3S,4S)-leucoanthocyanidin + NADP(+) = a (2R,3R)-dihydroflavonol + NADPH + H(+). The enzyme catalyses (2S)-flavan-4-ol + NADP(+) = (2S)-flavanone + NADPH + H(+). It participates in pigment biosynthesis; anthocyanin biosynthesis. Its function is as follows. Bifunctional enzyme involved in flavonoid metabolism. This Arabidopsis thaliana (Mouse-ear cress) protein is Dihydroflavonol 4-reductase (DFRA).